The following is a 1492-amino-acid chain: Copper-transporting ATPase 1 (1492 aa).

The Cytoplasmic segment spans residues 1–645 (MEPNMDANSI…KREIKQWRGS (645 aa)). HMA domains lie at 8-74 (NSIT…FDAL) and 85-151 (TNTV…LDMG). 3 residues coordinate Cu(+): Thr18, Cys19, and Cys22. Thr152 bears the Phosphothreonine mark. Positions 171-237 (VLLKMRVEGM…QIEAVGFPAF (67 aa)) constitute an HMA 3 domain. Cu(+) contacts are provided by Cys182 and Cys185. The residue at position 270 (Ser270) is a Phosphoserine. One can recognise an HMA 4 domain in the interval 277 to 343 (SAITFTIDGM…AIEAVSPGQY (67 aa)). Residues Cys288 and Cys291 each coordinate Cu(+). Thr327 carries the post-translational modification Phosphothreonine. Ser339, Ser353, Ser357, and Ser362 each carry phosphoserine. HMA domains are found at residues 377 to 443 (QEVV…FDAV), 480 to 546 (NKCY…FGAV), and 556 to 622 (GILE…FEAS). 6 residues coordinate Cu(+): Cys388, Cys391, Cys491, Cys494, Cys567, and Cys570. A helical transmembrane segment spans residues 646–667 (FLVSLFFCIPVMGLMIYMMVMD). Topologically, residues 668–706 (HHLATLNHNQNMSNEEMINMHSSMFLERQILPGLSIMNL) are extracellular. Asn678 carries an N-linked (GlcNAc...) asparagine glycan. Residues 707–726 (LSLLLCLPVQFCGGWYFYIQ) traverse the membrane as a helical segment. The Cytoplasmic portion of the chain corresponds to 727–733 (AYKALRH). Residues 734–754 (KTANMDVLIVLATTIAFAYSL) traverse the membrane as a helical segment. The Extracellular segment spans residues 755–773 (VILLVAMYERAKVNPITFF). A helical membrane pass occupies residues 774–794 (DTPPMLFVFIALGRWLEHIAK). At 795 to 927 (GKTSEALAKL…SKAPIQQFAD (133 aa)) the chain is on the cytoplasmic side. Residues 928–951 (KLSGYFVPFIVLVSIVTLLVWIII) form a helical membrane-spanning segment. Residues 952 to 981 (GFQNFEIVEAYFPGYNRSISRTETIIRFAF) are Extracellular-facing. The chain crosses the membrane as a helical span at residues 982–1003 (QASITVLCIACPCSLGLATPTA). Residues 1004-1348 (VMVGTGVGAQ…LSRKTVKRIR (345 aa)) lie on the Cytoplasmic side of the membrane. Residue Asp1036 is the 4-aspartylphosphate intermediate of the active site. Residue Glu1073 coordinates ATP. Thr1204 bears the Phosphothreonine mark. Asp1293 and Asp1297 together coordinate Mg(2+). The helical transmembrane segment at 1349–1366 (INFVFALIYNLIGIPIAA) threads the bilayer. Residues 1367-1377 (GVFLPIGLVLQ) are Extracellular-facing. Residues 1378-1397 (PWMGSAAMAASSVSVVLSSL) form a helical membrane-spanning segment. Over 1398–1492 (FLKLYRKPTY…DFREDDDTTL (95 aa)) the chain is Cytoplasmic. A phosphoserine mark is found at Ser1422, Ser1424, Ser1452, Ser1455, and Ser1458. The short motif at 1459 to 1460 (LL) is the Endocytosis signal element. Residues Ser1461, Ser1465, Ser1468, and Ser1478 each carry the phosphoserine modification. The segment at 1478–1492 (SLLVGDFREDDDTTL) is PDZD11-binding. The Endocytosis signal motif lies at 1479–1480 (LL).

It belongs to the cation transport ATPase (P-type) (TC 3.A.3) family. Type IB subfamily. As to quaternary structure, monomer. Interacts with PDZD11. Interacts with ATOX1 and COMMD1. Interacts with TYRP1. Directly interacts with SOD3; this interaction is copper-dependent and is required for SOD3 activity. Expressed in hippocampal neuron (at protein level). Expressed in anterior pituitary gland (at protein level).

The protein resides in the golgi apparatus. Its subcellular location is the trans-Golgi network membrane. The protein localises to the cell membrane. It localises to the melanosome membrane. It is found in the early endosome membrane. The protein resides in the cell projection. Its subcellular location is the axon. The protein localises to the dendrite. It localises to the postsynaptic density. The enzyme catalyses Cu(+)(in) + ATP + H2O = Cu(+)(out) + ADP + phosphate + H(+). Functionally, ATP-driven copper (Cu(+)) ion pump that plays an important role in intracellular copper ion homeostasis. Within a catalytic cycle, acquires Cu(+) ion from donor protein on the cytoplasmic side of the membrane and delivers it to acceptor protein on the lumenal side. The transfer of Cu(+) ion across the membrane is coupled to ATP hydrolysis and is associated with a transient phosphorylation that shifts the pump conformation from inward-facing to outward-facing state. Under physiological conditions, at low cytosolic copper concentration, it is localized at the trans-Golgi network (TGN) where it transfers Cu(+) ions to cuproenzymes of the secretory pathway. Upon elevated cytosolic copper concentrations, it relocalizes to the plasma membrane where it is responsible for the export of excess Cu(+) ions. May play a dual role in neuron function and survival by regulating cooper efflux and neuronal transmission at the synapse as well as by supplying Cu(+) ions to enzymes such as PAM, TYR and SOD3. In the melanosomes of pigmented cells, provides copper cofactor to TYR to form an active TYR holoenzyme for melanin biosynthesis. The polypeptide is Copper-transporting ATPase 1 (Rattus norvegicus (Rat)).